A 511-amino-acid chain; its full sequence is GMP synthase [glutamine-hydrolyzing] (511 aa).

The Glutamine amidotransferase type-1 domain occupies 5 to 195 (DILVLDFGSQ…AKYACNCESV (191 aa)). The active-site Nucleophile is the Cys-82. Active-site residues include His-169 and Glu-171. One can recognise a GMPS ATP-PPase domain in the interval 196–386 (WNMGSFAKTQ…LGLSKEVVYR (191 aa)). An ATP-binding site is contributed by 223 to 229 (SGGVDSS).

Homodimer.

It catalyses the reaction XMP + L-glutamine + ATP + H2O = GMP + L-glutamate + AMP + diphosphate + 2 H(+). Its pathway is purine metabolism; GMP biosynthesis; GMP from XMP (L-Gln route): step 1/1. Catalyzes the synthesis of GMP from XMP. The sequence is that of GMP synthase [glutamine-hydrolyzing] from Campylobacter jejuni subsp. jejuni serotype O:23/36 (strain 81-176).